Consider the following 58-residue polypeptide: Large ribosomal subunit protein uL30 (58 aa).

It belongs to the universal ribosomal protein uL30 family. Part of the 50S ribosomal subunit.

This is Large ribosomal subunit protein uL30 from Porphyromonas gingivalis (strain ATCC 33277 / DSM 20709 / CIP 103683 / JCM 12257 / NCTC 11834 / 2561).